The chain runs to 383 residues: 8-amino-7-oxononanoate synthase (383 aa).

Residue Arg-22 participates in substrate binding. Residue 109 to 110 participates in pyridoxal 5'-phosphate binding; it reads GF. His-134 contributes to the substrate binding site. Pyridoxal 5'-phosphate is bound by residues Ser-178, His-206, and Thr-232. At Lys-235 the chain carries N6-(pyridoxal phosphate)lysine. Position 348 (Thr-348) interacts with substrate.

Belongs to the class-II pyridoxal-phosphate-dependent aminotransferase family. BioF subfamily. As to quaternary structure, homodimer. It depends on pyridoxal 5'-phosphate as a cofactor.

The catalysed reaction is 6-carboxyhexanoyl-[ACP] + L-alanine + H(+) = (8S)-8-amino-7-oxononanoate + holo-[ACP] + CO2. It functions in the pathway cofactor biosynthesis; biotin biosynthesis. Functionally, catalyzes the decarboxylative condensation of pimeloyl-[acyl-carrier protein] and L-alanine to produce 8-amino-7-oxononanoate (AON), [acyl-carrier protein], and carbon dioxide. The protein is 8-amino-7-oxononanoate synthase of Vibrio campbellii (strain ATCC BAA-1116).